Here is a 217-residue protein sequence, read N- to C-terminus: Probable GTP-binding protein EngB (217 aa).

The EngB-type G domain occupies 33–217; the sequence is GPAEIAFAGR…RITIEQAVAR (185 aa). Residues 41-48, 68-72, 95-98, 162-165, and 196-198 contribute to the GTP site; these read GRSNVGKS, GRTQE, DMPG, TKTD, and TSS. Mg(2+) contacts are provided by Ser-48 and Thr-70.

It belongs to the TRAFAC class TrmE-Era-EngA-EngB-Septin-like GTPase superfamily. EngB GTPase family. Requires Mg(2+) as cofactor.

In terms of biological role, necessary for normal cell division and for the maintenance of normal septation. The protein is Probable GTP-binding protein EngB of Sinorhizobium fredii (strain NBRC 101917 / NGR234).